The chain runs to 707 residues: U-box domain-containing protein 2 (707 aa).

Residues 239–313 (RVPSDFRCSL…ASWCETNNVY (75 aa)) enclose the U-box domain. ARM repeat units follow at residues 453–492 (TDNRIVIARCEAIPSLVSLLYSTDERIQADAVTCLLNLSI), 494–534 (DNNK…SLSV), 536–575 (EEYKTEIGEAGAIEPLVDLLGSGSLSGKKDAATALFNLSI), 577–615 (HENKTKVIEAGAVRYLVELMDPAFGMVEKAVVVLANLAT), and 617–656 (REGKIAIGEEGGIPVLVEVVELGSARGKENATAALLQLCT).

It catalyses the reaction S-ubiquitinyl-[E2 ubiquitin-conjugating enzyme]-L-cysteine + [acceptor protein]-L-lysine = [E2 ubiquitin-conjugating enzyme]-L-cysteine + N(6)-ubiquitinyl-[acceptor protein]-L-lysine.. Its pathway is protein modification; protein ubiquitination. In terms of biological role, functions as an E3 ubiquitin ligase. The protein is U-box domain-containing protein 2 (PUB2) of Arabidopsis thaliana (Mouse-ear cress).